The primary structure comprises 876 residues: Probable LRR receptor-like protein kinase At1g51890 (876 aa).

A signal peptide spans 1–19 (MRFLSFLIFVFAVLGLVQA). Residues 20-500 (QDQSGFISLD…TGKNSTNVVA (481 aa)) lie on the Extracellular side of the membrane. N45, N90, N138, N177, N251, N259, N284, N290, N327, N335, N397, N412, and N417 each carry an N-linked (GlcNAc...) asparagine glycan. LRR repeat units lie at residues 407–430 (QIISLNLSGSNLSGTITSDISKLT), 431–453 (HLRELDLSNNDLSGDIPFVFSDM), and 455–476 (NLTLINLSGNKNLNRSVPETLQ). N-linked (GlcNAc...) asparagine glycosylation is found at N455, N460, N468, N481, and N494. The chain crosses the membrane as a helical span at residues 501-521 (IAASVASVFAVLVILAIVFVV). Residues 522–872 (IRKKQRTNEA…FSPSSASDFS (351 aa)) lie on the Cytoplasmic side of the membrane. T561 carries the phosphothreonine modification. One can recognise a Protein kinase domain in the interval 570–842 (KNFERVLGKG…HVVMELNECL (273 aa)). ATP is bound by residues 576-584 (LGKGGFGTV) and K597. Y642 is modified (phosphotyrosine). D694 (proton acceptor) is an active-site residue. Residues T729 and T734 each carry the phosphothreonine modification. Position 742 is a phosphotyrosine (Y742).

Belongs to the protein kinase superfamily. Ser/Thr protein kinase family.

It localises to the cell membrane. The catalysed reaction is L-seryl-[protein] + ATP = O-phospho-L-seryl-[protein] + ADP + H(+). It carries out the reaction L-threonyl-[protein] + ATP = O-phospho-L-threonyl-[protein] + ADP + H(+). The polypeptide is Probable LRR receptor-like protein kinase At1g51890 (Arabidopsis thaliana (Mouse-ear cress)).